We begin with the raw amino-acid sequence, 491 residues long: Cytochrome P450 2F1 (491 aa).

Residue Cys436 coordinates heme.

Belongs to the cytochrome P450 family. It depends on heme as a cofactor. Expressed in lung. Rarely detected in liver and placenta.

It localises to the endoplasmic reticulum membrane. Its subcellular location is the microsome membrane. The enzyme catalyses an organic molecule + reduced [NADPH--hemoprotein reductase] + O2 = an alcohol + oxidized [NADPH--hemoprotein reductase] + H2O + H(+). May be involved in the metabolism of various pneumotoxicants including naphthalene. Is able to dealkylate ethoxycoumarin, propoxycoumarin, and pentoxyresorufin but possesses no activity toward ethoxyresorufin and only trace dearylation activity toward benzyloxyresorufin. Bioactivates 3-methylindole (3MI) by dehydrogenation to the putative electrophile 3-methylene-indolenine. The sequence is that of Cytochrome P450 2F1 (CYP2F1) from Homo sapiens (Human).